The following is an 866-amino-acid chain: Probable beta-glucosidase F (866 aa).

The signal sequence occupies residues 1-20 (MAAFPAYLALLSYLVPGALS). N-linked (GlcNAc...) asparagine glycans are attached at residues asparagine 65, asparagine 73, and asparagine 257. Aspartate 285 is an active-site residue. Residues asparagine 328, asparagine 360, asparagine 395, asparagine 421, asparagine 474, asparagine 659, asparagine 664, and asparagine 724 are each glycosylated (N-linked (GlcNAc...) asparagine). A disordered region spans residues 725–748 (SSKTYPYPDGYTTEPKPAPRAGGA).

This sequence belongs to the glycosyl hydrolase 3 family.

It localises to the secreted. It carries out the reaction Hydrolysis of terminal, non-reducing beta-D-glucosyl residues with release of beta-D-glucose.. The protein operates within glycan metabolism; cellulose degradation. Beta-glucosidases are one of a number of cellulolytic enzymes involved in the degradation of cellulosic biomass. Catalyzes the last step releasing glucose from the inhibitory cellobiose. The protein is Probable beta-glucosidase F (bglF) of Aspergillus oryzae (strain ATCC 42149 / RIB 40) (Yellow koji mold).